The chain runs to 446 residues: MSSSTSTIVAIASAAGTGGVGIVRLSGPQSRQIAVQLGVARLQPRHAHYARFRDAQGAVIDDGIALWFNAPHSFTGEDVVELQGHGSPVLLRQLVARCIELGARQARAGEFSERAFLNGKLDLAQAEAIADVIAAGDLRAARAARRALDGVFSRRVDAVAHTLTRLRIHVEAAIDFADEPLDTLGGNQVRDGLTQARTLLAQLLRDAERGRTLRDGLHAVLIGPPNAGKSSLLNALAGSERAIVTDVAGTTRDTLHEAIQLDGFELTLVDTAGLRDGGDAIEREGMRRARAELERADLALVVLDARDPQAARAAIGDAIDAVPRQLWIHNKCDLLSDAAPLDVNAIAVSAVTGQGLEQLHIRLRELALGDGVEGVDGEFSARTRHVEALRRAERHVDAADLELGFEQLELAAEELRLAHEALGEITGKISADDLLGKIFSSFCIGK.

3 residues coordinate (6S)-5-formyl-5,6,7,8-tetrahydrofolate: arginine 24, glutamate 81, and lysine 120. The region spanning 216-368 (GLHAVLIGPP…LHIRLRELAL (153 aa)) is the TrmE-type G domain. Asparagine 226 is a K(+) binding site. GTP-binding positions include 226–231 (NAGKSS), 245–251 (TDVAGTT), and 270–273 (DTAG). Residue serine 230 participates in Mg(2+) binding. Threonine 245, valine 247, and threonine 250 together coordinate K(+). Residue threonine 251 participates in Mg(2+) binding. A (6S)-5-formyl-5,6,7,8-tetrahydrofolate-binding site is contributed by lysine 446.

This sequence belongs to the TRAFAC class TrmE-Era-EngA-EngB-Septin-like GTPase superfamily. TrmE GTPase family. In terms of assembly, homodimer. Heterotetramer of two MnmE and two MnmG subunits. K(+) is required as a cofactor.

The protein localises to the cytoplasm. In terms of biological role, exhibits a very high intrinsic GTPase hydrolysis rate. Involved in the addition of a carboxymethylaminomethyl (cmnm) group at the wobble position (U34) of certain tRNAs, forming tRNA-cmnm(5)s(2)U34. This chain is tRNA modification GTPase MnmE, found in Xanthomonas oryzae pv. oryzae (strain MAFF 311018).